We begin with the raw amino-acid sequence, 424 residues long: Serine--tRNA ligase (424 aa).

231–233 provides a ligand contact to L-serine; sequence TAE. 262 to 264 is an ATP binding site; that stretch reads RSE. L-serine is bound at residue Glu285. 349-352 contributes to the ATP binding site; that stretch reads EISS. Ser385 serves as a coordination point for L-serine.

Belongs to the class-II aminoacyl-tRNA synthetase family. Type-1 seryl-tRNA synthetase subfamily. In terms of assembly, homodimer. The tRNA molecule binds across the dimer.

Its subcellular location is the cytoplasm. The enzyme catalyses tRNA(Ser) + L-serine + ATP = L-seryl-tRNA(Ser) + AMP + diphosphate + H(+). It carries out the reaction tRNA(Sec) + L-serine + ATP = L-seryl-tRNA(Sec) + AMP + diphosphate + H(+). The protein operates within aminoacyl-tRNA biosynthesis; selenocysteinyl-tRNA(Sec) biosynthesis; L-seryl-tRNA(Sec) from L-serine and tRNA(Sec): step 1/1. Its function is as follows. Catalyzes the attachment of serine to tRNA(Ser). Is also able to aminoacylate tRNA(Sec) with serine, to form the misacylated tRNA L-seryl-tRNA(Sec), which will be further converted into selenocysteinyl-tRNA(Sec). This Bacillus anthracis (strain A0248) protein is Serine--tRNA ligase.